Consider the following 445-residue polypeptide: UPF0210 protein SPP_0289 (445 aa).

This sequence belongs to the UPF0210 family. In terms of assembly, homodimer.

In Streptococcus pneumoniae (strain P1031), this protein is UPF0210 protein SPP_0289.